The chain runs to 155 residues: Endoribonuclease YbeY (155 aa).

Residues His-120, His-124, and His-130 each coordinate Zn(2+).

This sequence belongs to the endoribonuclease YbeY family. It depends on Zn(2+) as a cofactor.

The protein resides in the cytoplasm. Functionally, single strand-specific metallo-endoribonuclease involved in late-stage 70S ribosome quality control and in maturation of the 3' terminus of the 16S rRNA. In Staphylococcus epidermidis (strain ATCC 35984 / DSM 28319 / BCRC 17069 / CCUG 31568 / BM 3577 / RP62A), this protein is Endoribonuclease YbeY.